The sequence spans 222 residues: Pyridoxine/pyridoxamine 5'-phosphate oxidase (222 aa).

FMN-binding positions include R69–K74, Y84–T85, K91, and Q113. K74 contributes to the substrate binding site. 3 residues coordinate substrate: Y131, R135, and S139. Residues Q148 to S149 and W193 each bind FMN. R199–H201 lines the substrate pocket. R203 contributes to the FMN binding site.

This sequence belongs to the pyridoxamine 5'-phosphate oxidase family. Homodimer. Requires FMN as cofactor.

The enzyme catalyses pyridoxamine 5'-phosphate + O2 + H2O = pyridoxal 5'-phosphate + H2O2 + NH4(+). It carries out the reaction pyridoxine 5'-phosphate + O2 = pyridoxal 5'-phosphate + H2O2. It functions in the pathway cofactor metabolism; pyridoxal 5'-phosphate salvage; pyridoxal 5'-phosphate from pyridoxamine 5'-phosphate: step 1/1. It participates in cofactor metabolism; pyridoxal 5'-phosphate salvage; pyridoxal 5'-phosphate from pyridoxine 5'-phosphate: step 1/1. Its function is as follows. Catalyzes the oxidation of either pyridoxine 5'-phosphate (PNP) or pyridoxamine 5'-phosphate (PMP) into pyridoxal 5'-phosphate (PLP). This Maricaulis maris (strain MCS10) (Caulobacter maris) protein is Pyridoxine/pyridoxamine 5'-phosphate oxidase.